Consider the following 572-residue polypeptide: Proline--tRNA ligase (572 aa).

It belongs to the class-II aminoacyl-tRNA synthetase family. ProS type 1 subfamily. As to quaternary structure, homodimer.

The protein localises to the cytoplasm. The enzyme catalyses tRNA(Pro) + L-proline + ATP = L-prolyl-tRNA(Pro) + AMP + diphosphate. Catalyzes the attachment of proline to tRNA(Pro) in a two-step reaction: proline is first activated by ATP to form Pro-AMP and then transferred to the acceptor end of tRNA(Pro). As ProRS can inadvertently accommodate and process non-cognate amino acids such as alanine and cysteine, to avoid such errors it has two additional distinct editing activities against alanine. One activity is designated as 'pretransfer' editing and involves the tRNA(Pro)-independent hydrolysis of activated Ala-AMP. The other activity is designated 'posttransfer' editing and involves deacylation of mischarged Ala-tRNA(Pro). The misacylated Cys-tRNA(Pro) is not edited by ProRS. This Haemophilus influenzae (strain 86-028NP) protein is Proline--tRNA ligase.